A 96-amino-acid polypeptide reads, in one-letter code: ESAT-6-like protein SAG0230 (96 aa).

The protein belongs to the WXG100 family. sagEsxA-like subfamily. As to quaternary structure, homodimer.

This chain is ESAT-6-like protein SAG0230, found in Streptococcus agalactiae serotype V (strain ATCC BAA-611 / 2603 V/R).